A 232-amino-acid polypeptide reads, in one-letter code: MMKKPIQVFLAGDSTVSDCPPHEAPMAGWGQVFGQLFSEGVLVRNHAKGGASTNSFVEEGRLQAIAEHITQGDYLLIQFGHNDQKPRGTKPYSTFQQFLTLFADTAREKGAHPVFVTSVQRRRFDENGRIEHTLGEYPDAMKALAKELDVPVIDLLAKTKVLYEAYGPEESKRLFVWFQPNEHPNYPDGIEDNTHFSEKGAMEVAKLVAEGIEELGLPLKDHLVSREGKEHV.

Serine 14 (nucleophile) is an active-site residue. Catalysis depends on residues glutamate 191 and histidine 195.

Belongs to the 'GDSL' lipolytic enzyme family. As to quaternary structure, monomer.

Its activity is regulated as follows. Almost completely inhibited by diethylpyrocarbonate at 5 mM and completely inhibited by phenylmethylsulfonyl fluoride (PMSF) at 50 mM. Dimethyl phosphite achieves only a 53% inhibition. Also inhibited by metal ions (magnesium, manganese and calcium) and chelating agent (EDTA) at the same level. May play a role in the degradation of type I rhamnogalacturonan derived from plant cell walls. This enzyme has a broad substrate specificity, and shows strong preference for glucose pentaacetate, beta-naphthylacetate, and p-nitrophenyl acetate (pNPA). Also active toward acetylated xylan. This chain is Rhamnogalacturonan acetylesterase RhgT (rhgT), found in Bacillus subtilis (strain 168).